A 197-amino-acid polypeptide reads, in one-letter code: Elongation factor Ts (197 aa).

The interval 81–84 (TDFV) is involved in Mg(2+) ion dislocation from EF-Tu.

Belongs to the EF-Ts family.

The protein resides in the cytoplasm. In terms of biological role, associates with the EF-Tu.GDP complex and induces the exchange of GDP to GTP. It remains bound to the aminoacyl-tRNA.EF-Tu.GTP complex up to the GTP hydrolysis stage on the ribosome. The chain is Elongation factor Ts from Persephonella marina (strain DSM 14350 / EX-H1).